A 245-amino-acid chain; its full sequence is 3-deoxy-manno-octulosonate cytidylyltransferase (245 aa).

This sequence belongs to the KdsB family.

It localises to the cytoplasm. It carries out the reaction 3-deoxy-alpha-D-manno-oct-2-ulosonate + CTP = CMP-3-deoxy-beta-D-manno-octulosonate + diphosphate. The protein operates within nucleotide-sugar biosynthesis; CMP-3-deoxy-D-manno-octulosonate biosynthesis; CMP-3-deoxy-D-manno-octulosonate from 3-deoxy-D-manno-octulosonate and CTP: step 1/1. Its pathway is bacterial outer membrane biogenesis; lipopolysaccharide biosynthesis. In terms of biological role, activates KDO (a required 8-carbon sugar) for incorporation into bacterial lipopolysaccharide in Gram-negative bacteria. This chain is 3-deoxy-manno-octulosonate cytidylyltransferase, found in Fusobacterium nucleatum subsp. nucleatum (strain ATCC 25586 / DSM 15643 / BCRC 10681 / CIP 101130 / JCM 8532 / KCTC 2640 / LMG 13131 / VPI 4355).